We begin with the raw amino-acid sequence, 951 residues long: Glycine dehydrogenase (decarboxylating) 1 (951 aa).

K703 is modified (N6-(pyridoxal phosphate)lysine).

It belongs to the GcvP family. As to quaternary structure, the glycine cleavage system is composed of four proteins: P, T, L and H. Pyridoxal 5'-phosphate serves as cofactor.

It catalyses the reaction N(6)-[(R)-lipoyl]-L-lysyl-[glycine-cleavage complex H protein] + glycine + H(+) = N(6)-[(R)-S(8)-aminomethyldihydrolipoyl]-L-lysyl-[glycine-cleavage complex H protein] + CO2. The glycine cleavage system catalyzes the degradation of glycine. The P protein binds the alpha-amino group of glycine through its pyridoxal phosphate cofactor; CO(2) is released and the remaining methylamine moiety is then transferred to the lipoamide cofactor of the H protein. The protein is Glycine dehydrogenase (decarboxylating) 1 of Pseudomonas fluorescens (strain ATCC BAA-477 / NRRL B-23932 / Pf-5).